The following is a 338-amino-acid chain: Mas-related G-protein coupled receptor member B2 (338 aa).

Residues 1–40 (MSGDFLIKNLSTSAWKTNITVLNGSYYIDTSVCVTRNQAM) lie on the Extracellular side of the membrane. Residues Asn9, Asn18, and Asn23 are each glycosylated (N-linked (GlcNAc...) asparagine). Residues 41–61 (ILLSIIISLVGMGLNAIVLWF) traverse the membrane as a helical segment. The Cytoplasmic segment spans residues 62–89 (LGIRMHTNAFTVYILNLAMADFLYLCSQ). Residues 90-110 (FVICLLIAFYIFYSIDINIPL) form a helical membrane-spanning segment. Residue Val111 is a topological domain, extracellular. Residues 112 to 132 (LYVVPIFAYLSGLSILSTISI) form a helical membrane-spanning segment. Topologically, residues 133–157 (ERCLSVIWPIWYRCKRPRHTSAITC) are cytoplasmic. A helical transmembrane segment spans residues 158-178 (FVLWVMSLLLGLLEGKACGLL). Residues 179–191 (FNSFDSYWCETFD) are Extracellular-facing. The chain crosses the membrane as a helical span at residues 192-212 (VITNIWSVVFFGVLCGSSLTL). Residues 213–231 (LVRIFCGSQRIPMTRLYVT) lie on the Cytoplasmic side of the membrane. The chain crosses the membrane as a helical span at residues 232–252 (ITLTVLVFLIFGLPFGIYWIL). The Extracellular portion of the chain corresponds to 253-268 (YQWISNFYYVEICNFY). Residues 269 to 289 (LEILFLSCVNSCMNPIIYFLV) form a helical membrane-spanning segment. The Cytoplasmic portion of the chain corresponds to 290-338 (GSIRHRRFRRKTLKLLLQRAMQDTPEEEQSGNKSSSEHPEELETVQSCS). The interval 310–338 (MQDTPEEEQSGNKSSSEHPEELETVQSCS) is disordered.

The protein belongs to the G-protein coupled receptor 1 family. Mas subfamily. In terms of tissue distribution, mast cell-specific.

Its subcellular location is the cell membrane. Its function is as follows. Mast cell-specific receptor for basic secretagogues, i.e. cationic amphiphilic drugs, as well as endo- or exogenous peptides, consisting of a basic head group and a hydrophobic core. Recognizes and binds small molecules containing a cyclized tetrahydroisoquinoline (THIQ), such as non-steroidal neuromuscular blocking drugs (NMBDs), including tubocurarine and atracurium. In response to these compounds, mediates pseudo-allergic reactions characterized by histamine release, inflammation and airway contraction. In Mus musculus (Mouse), this protein is Mas-related G-protein coupled receptor member B2 (Mrgprb2).